The sequence spans 426 residues: Mitochondrial distribution and morphology protein 12 (426 aa).

In terms of domain architecture, SMP-LTD spans 1 to 426 (MSIEVDWKTA…VFPSFWTFLI (426 aa)). 3 disordered regions span residues 88-147 (AHGN…GTPG), 185-264 (WTDH…FRFP), and 346-370 (ADDQETRDKDDHPRSGLDPTTSPKR). Residues 96-109 (THSELNEPPYRDEV) show a composition bias toward basic and acidic residues. Low complexity predominate over residues 216 to 236 (SSNPTSRPSTSSTLPSHPSGS). Composition is skewed to basic and acidic residues over residues 244 to 264 (SHPEEEHLDDPAEPDHPFRFP) and 349 to 360 (QETRDKDDHPRS).

It belongs to the MDM12 family. In terms of assembly, component of the ER-mitochondria encounter structure (ERMES) or MDM complex, composed of mmm1, mdm10, mdm12 and mdm34. A mmm1 homodimer associates with one molecule of mdm12 on each side in a pairwise head-to-tail manner, and the SMP-LTD domains of mmm1 and mdm12 generate a continuous hydrophobic tunnel for phospholipid trafficking.

It localises to the mitochondrion outer membrane. The protein resides in the endoplasmic reticulum membrane. In terms of biological role, component of the ERMES/MDM complex, which serves as a molecular tether to connect the endoplasmic reticulum (ER) and mitochondria. Components of this complex are involved in the control of mitochondrial shape and protein biogenesis, and function in nonvesicular lipid trafficking between the ER and mitochondria. Mdm12 is required for the interaction of the ER-resident membrane protein mmm1 and the outer mitochondrial membrane-resident beta-barrel protein mdm10. The mdm12-mmm1 subcomplex functions in the major beta-barrel assembly pathway that is responsible for biogenesis of all mitochondrial outer membrane beta-barrel proteins, and acts in a late step after the SAM complex. The mdm10-mdm12-mmm1 subcomplex further acts in the TOM40-specific pathway after the action of the mdm12-mmm1 complex. Essential for establishing and maintaining the structure of mitochondria and maintenance of mtDNA nucleoids. This is Mitochondrial distribution and morphology protein 12 from Aspergillus terreus (strain NIH 2624 / FGSC A1156).